A 72-amino-acid polypeptide reads, in one-letter code: Potassium channel toxin kappa-KTx 5.1 (72 aa).

Residues 1-23 (MKLLPLLFVILIVCAILPDEASC) form the signal peptide. The propeptide occupies 24-43 (DQSELERKEENFKDESREIV). Cystine bridges form between C47-C64 and C51-C60. The residue at position 70 (H70) is a Histidine amide.

Belongs to the short scorpion toxin superfamily. Potassium channel inhibitor kappa-KTx family. Kappa-KTx 5 subfamily. Expressed by the venom gland.

The protein resides in the secreted. In terms of biological role, weak blocker of potassium channels Kv1.1/KCNA1 (IC(50)=578.5 nM-9.9 uM) and Kv1.6/KCNA6 (~60% block at 30 uM of toxin). Acts by binding to the pore and occluding it. Has a voltage-dependent mode of action, which can be explained by a high content of basic residues causing repulsions at higher membrane voltages. Shows a weak interaction with muscle-type nicotinic acetylcholine receptors (nAChR), since it inhibits alpha-bungarotoxin binding to muscle-type nAChR from T.californica (IC(50)=1.4 uM). This suggests it probably weakly inhibits muscle nAChR. The mode of binding to potassium channels of this toxin differs from its homologs (including HefuTx1), since it lacks the key aromatic residue of the functional dyad. In contrast, its functionally important site is composed of a number of basic residues. This is Potassium channel toxin kappa-KTx 5.1 from Heterometrus laoticus (Thai giant scorpion).